Consider the following 121-residue polypeptide: uncharacterized protein (121 aa).

This is an uncharacterized protein from Saccharomyces cerevisiae (strain ATCC 204508 / S288c) (Baker's yeast).